Consider the following 361-residue polypeptide: DNA replication and repair protein RecF (361 aa).

30 to 37 is a binding site for ATP; sequence GQNAQGKT.

The protein belongs to the RecF family.

The protein localises to the cytoplasm. Functionally, the RecF protein is involved in DNA metabolism; it is required for DNA replication and normal SOS inducibility. RecF binds preferentially to single-stranded, linear DNA. It also seems to bind ATP. This is DNA replication and repair protein RecF from Streptococcus gordonii (strain Challis / ATCC 35105 / BCRC 15272 / CH1 / DL1 / V288).